A 690-amino-acid polypeptide reads, in one-letter code: Methionine--tRNA ligase (690 aa).

The 'HIGH' region signature appears at 20–30; sequence PYANGSIHLGH. C151, C154, C164, and C167 together coordinate Zn(2+). The 'KMSKS' region signature appears at 337 to 341; the sequence is KMSKS. K340 serves as a coordination point for ATP. One can recognise a tRNA-binding domain in the interval 589–690; the sequence is DFAKVDLRIA…EGAQPGMRVM (102 aa).

This sequence belongs to the class-I aminoacyl-tRNA synthetase family. MetG type 1 subfamily. As to quaternary structure, homodimer. Requires Zn(2+) as cofactor.

It localises to the cytoplasm. The enzyme catalyses tRNA(Met) + L-methionine + ATP = L-methionyl-tRNA(Met) + AMP + diphosphate. Its function is as follows. Is required not only for elongation of protein synthesis but also for the initiation of all mRNA translation through initiator tRNA(fMet) aminoacylation. The sequence is that of Methionine--tRNA ligase from Vibrio vulnificus (strain CMCP6).